The primary structure comprises 72 residues: NAD(P)H-quinone oxidoreductase subunit O (72 aa).

Belongs to the complex I NdhO subunit family. As to quaternary structure, NDH-1 can be composed of about 15 different subunits; different subcomplexes with different compositions have been identified which probably have different functions.

It localises to the cellular thylakoid membrane. It catalyses the reaction a plastoquinone + NADH + (n+1) H(+)(in) = a plastoquinol + NAD(+) + n H(+)(out). The catalysed reaction is a plastoquinone + NADPH + (n+1) H(+)(in) = a plastoquinol + NADP(+) + n H(+)(out). In terms of biological role, NDH-1 shuttles electrons from an unknown electron donor, via FMN and iron-sulfur (Fe-S) centers, to quinones in the respiratory and/or the photosynthetic chain. The immediate electron acceptor for the enzyme in this species is believed to be plastoquinone. Couples the redox reaction to proton translocation, and thus conserves the redox energy in a proton gradient. Cyanobacterial NDH-1 also plays a role in inorganic carbon-concentration. The sequence is that of NAD(P)H-quinone oxidoreductase subunit O from Gloeothece citriformis (strain PCC 7424) (Cyanothece sp. (strain PCC 7424)).